A 396-amino-acid polypeptide reads, in one-letter code: Chaperone protein DnaJ (396 aa).

Positions 6–71 (DYYEVLEVTK…DKRSRYDQFG (66 aa)) constitute a J domain. A CR-type zinc finger spans residues 154 to 236 (GVEKKFKLKK…CGGDGIVYGE (83 aa)). C167, C170, C184, C187, C210, C213, C224, and C227 together coordinate Zn(2+). 4 CXXCXGXG motif repeats span residues 167-174 (CNHCHGTG), 184-191 (CPTCKGSG), 210-217 (CPTCNGEG), and 224-231 (CKECGGDG).

It belongs to the DnaJ family. In terms of assembly, homodimer. Requires Zn(2+) as cofactor.

It is found in the cytoplasm. Functionally, participates actively in the response to hyperosmotic and heat shock by preventing the aggregation of stress-denatured proteins and by disaggregating proteins, also in an autonomous, DnaK-independent fashion. Unfolded proteins bind initially to DnaJ; upon interaction with the DnaJ-bound protein, DnaK hydrolyzes its bound ATP, resulting in the formation of a stable complex. GrpE releases ADP from DnaK; ATP binding to DnaK triggers the release of the substrate protein, thus completing the reaction cycle. Several rounds of ATP-dependent interactions between DnaJ, DnaK and GrpE are required for fully efficient folding. Also involved, together with DnaK and GrpE, in the DNA replication of plasmids through activation of initiation proteins. In Bacteroides thetaiotaomicron (strain ATCC 29148 / DSM 2079 / JCM 5827 / CCUG 10774 / NCTC 10582 / VPI-5482 / E50), this protein is Chaperone protein DnaJ.